A 391-amino-acid polypeptide reads, in one-letter code: Phosphoglycerate kinase (391 aa).

Substrate is bound by residues 21–23 (DLN), Arg-36, 59–62 (HLGR), Arg-113, and Arg-146. Residues Lys-197, Glu-319, and 345 to 348 (GGDT) contribute to the ATP site.

The protein belongs to the phosphoglycerate kinase family. Monomer.

The protein localises to the cytoplasm. It catalyses the reaction (2R)-3-phosphoglycerate + ATP = (2R)-3-phospho-glyceroyl phosphate + ADP. Its pathway is carbohydrate degradation; glycolysis; pyruvate from D-glyceraldehyde 3-phosphate: step 2/5. The polypeptide is Phosphoglycerate kinase (Shewanella frigidimarina (strain NCIMB 400)).